A 639-amino-acid polypeptide reads, in one-letter code: Chaperone protein DnaK (639 aa).

Thr197 is subject to Phosphothreonine; by autocatalysis. A disordered region spans residues 600 to 639 (SGAQGGAQAGPDMNAGQSNAGQNNGKQDDNVQDADFEEVK). Low complexity predominate over residues 613 to 624 (NAGQSNAGQNNG). Over residues 629–639 (NVQDADFEEVK) the composition is skewed to acidic residues.

This sequence belongs to the heat shock protein 70 family.

In terms of biological role, acts as a chaperone. The sequence is that of Chaperone protein DnaK from Bacteroides fragilis (strain ATCC 25285 / DSM 2151 / CCUG 4856 / JCM 11019 / LMG 10263 / NCTC 9343 / Onslow / VPI 2553 / EN-2).